The sequence spans 505 residues: Maturase K (505 aa).

Belongs to the intron maturase 2 family. MatK subfamily.

It is found in the plastid. It localises to the chloroplast. In terms of biological role, usually encoded in the trnK tRNA gene intron. Probably assists in splicing its own and other chloroplast group II introns. In Gomphrena pulchella (Globe amaranth), this protein is Maturase K.